A 542-amino-acid polypeptide reads, in one-letter code: MAAKEVRFSDDARHRMLAGVNILADAVKQTLGPKGRNVVLEKSFGAPVVTKDGVSVAKEIELKDKFENMGAQMVKEVASKTSDVAGDGTTTATVLAQAIVREGLKSVAAGANPMDIKRGIDQAVGVVVEELKKLSKPCTDSKAIAQVGTISANSDESIGQIIAQAMDTVGKEGVITVEEGSGLQNELDVVEGMQFDRGYLSPYFINKQDTMGVELENPYVLLHDKKISSIRDLLPVLEKTAKAGRSLLIIAEDVDGEALATLVVNNMRGILKVCAVKAPGFGDRRKAMLEDIAILTGGQVISEELGLSLEKVELTDLGQAKKIQINKETTTIVDGAGSADAIKARVEQIRKQIEDTTSDYDREKLQERVAKLAGGVAVIKVGAATEVEMKEKKARVEDALHATRAAVEEGIVPGGGVALIRAQQALKTLEGKNHDQTVGIAILRRAIEEPLRQIVANAGEEPSVVLAKVQEGTGTFGYNAGTAEYGDMIEMGILDPTKVTRSALQNAASVAGLMLTTEAMVAEMPKKEKGGMPAGGGMDDMM.

ATP-binding positions include 30-33 (TLGP), Lys-51, 87-91 (DGTTT), Gly-415, and Asp-495.

It belongs to the chaperonin (HSP60) family. In terms of assembly, forms a cylinder of 14 subunits composed of two heptameric rings stacked back-to-back. Interacts with the co-chaperonin GroES.

It localises to the cytoplasm. The enzyme catalyses ATP + H2O + a folded polypeptide = ADP + phosphate + an unfolded polypeptide.. Together with its co-chaperonin GroES, plays an essential role in assisting protein folding. The GroEL-GroES system forms a nano-cage that allows encapsulation of the non-native substrate proteins and provides a physical environment optimized to promote and accelerate protein folding. This is Chaperonin GroEL 2 from Methylococcus capsulatus (strain ATCC 33009 / NCIMB 11132 / Bath).